A 1110-amino-acid polypeptide reads, in one-letter code: RNA2 polyprotein (1110 aa).

The segment at 195–215 (VHPGGPALPPPPPPPPIQKPP) is disordered. Residues 200 to 213 (PALPPPPPPPPIQK) are compositionally biased toward pro residues.

This sequence belongs to the nepoviruses RNA2 polyprotein family. Specific enzymatic cleavages in vivo by the P1 encoded 3C-like protease yield mature proteins.

It is found in the host cell junction. The protein localises to the host plasmodesma. The protein resides in the virion. Implicated in RNA2 replication. Could also be required for nematode transmission of the virus. Functionally, transports viral genome to neighboring plant cells directly through plasmosdesmata, without any budding. The movement protein allows efficient cell to cell propagation, by bypassing the host cell wall barrier. Acts by forming a tubular structure at the host plasmodesmata, enlarging it enough to allow free passage of virion capsids. The polypeptide is RNA2 polyprotein (Arabis mosaic virus (isolate NW) (ArMV)).